The sequence spans 145 residues: Ribonuclease H (145 aa).

One can recognise an RNase H type-1 domain in the interval 1–142 (MDTPVYLYTD…ADDLANRGAA (142 aa)). Mg(2+)-binding residues include Asp-10, Glu-48, Asp-70, and Asp-134.

It belongs to the RNase H family. Monomer. Mg(2+) serves as cofactor.

It is found in the cytoplasm. The enzyme catalyses Endonucleolytic cleavage to 5'-phosphomonoester.. Endonuclease that specifically degrades the RNA of RNA-DNA hybrids. The protein is Ribonuclease H of Neisseria gonorrhoeae (strain ATCC 700825 / FA 1090).